Here is an 862-residue protein sequence, read N- to C-terminus: Linoleate 9S-lipoxygenase 1 (862 aa).

The region spanning 34–161 is the PLAT domain; sequence NDFGATIIDG…NYRYSRVFFA (128 aa). Positions 164 to 862 constitute a Lipoxygenase domain; sequence TYLPSQMPAA…AKGIPNSISI (699 aa). The disordered stretch occupies residues 212-241; the sequence is GRPILGGNSDHPYPRRGRTERKPNASDPSL. Residues His-517, His-522, His-708, Asn-712, and Ile-862 each coordinate Fe cation.

Belongs to the lipoxygenase family. Monomer. Fe cation serves as cofactor.

The enzyme catalyses (9Z,12Z)-octadecadienoate + O2 = (9S)-hydroperoxy-(10E,12Z)-octadecadienoate. It functions in the pathway lipid metabolism; oxylipin biosynthesis. Its function is as follows. Plant lipoxygenase may be involved in a number of diverse aspects of plant physiology including growth and development, pest resistance, and senescence or responses to wounding. It catalyzes the hydroperoxidation of lipids containing a cis,cis-1,4-pentadiene structure. This chain is Linoleate 9S-lipoxygenase 1 (LOX1.1), found in Hordeum vulgare (Barley).